Consider the following 868-residue polypeptide: mRNA-capping enzyme (868 aa).

The active-site N6-GMP-lysine intermediate is Lys-282. Positions 594–868 (GIYRAQTALI…LFGFICLRKN (275 aa)) constitute an mRNA cap 0 methyltransferase domain. Residues Lys-607, Gly-624, Asp-646, and 710 to 712 (LFI) each bind S-adenosyl-L-methionine.

This sequence in the N-terminal section; belongs to the dsDNA virus mRNA guanylyltransferase family. The protein in the C-terminal section; belongs to the class I-like SAM-binding methyltransferase superfamily. mRNA cap 0 methyltransferase family. As to quaternary structure, part of the viral DNA-directed RNA polymerase that consists of 8 polII-like subunits (RPB1, RPB2, RPB3, RPB5, RPB6, RPB7, RPB9, RPB10), a capping enzyme and a termination factor.

The protein resides in the virion. It catalyses the reaction a 5'-end triphospho-ribonucleoside in mRNA + H2O = a 5'-end diphospho-ribonucleoside in mRNA + phosphate + H(+). It carries out the reaction a 5'-end diphospho-ribonucleoside in mRNA + GTP + H(+) = a 5'-end (5'-triphosphoguanosine)-ribonucleoside in mRNA + diphosphate. The enzyme catalyses a 5'-end (5'-triphosphoguanosine)-ribonucleoside in mRNA + S-adenosyl-L-methionine = a 5'-end (N(7)-methyl 5'-triphosphoguanosine)-ribonucleoside in mRNA + S-adenosyl-L-homocysteine. It functions in the pathway mRNA processing; mRNA capping. In terms of biological role, probably catalyzes the second reaction in the mRNA cap formation pathway. Forms a covalent complex with GTP. The protein is mRNA-capping enzyme of Ornithodoros (relapsing fever ticks).